The chain runs to 82 residues: MKLTCMMIVAVLFLTAWTFVTAVPHSSNVLENLYLKARHEMENQEASKLNMRDDDCEPPGNFCGFPKIGGPCCSGWCFFACA.

An N-terminal signal peptide occupies residues 1–22; the sequence is MKLTCMMIVAVLFLTAWTFVTA. The propeptide occupies 23-52; the sequence is VPHSSNVLENLYLKARHEMENQEASKLNMR. 3 disulfide bridges follow: C56–C73, C63–C77, and C72–C81. 6'-bromotryptophan; partial; in Am6.2b (major form) is present on W76.

Belongs to the conotoxin O1 family. Post-translationally, mostly non-hydroxylated. In terms of processing, two forms of this peptides have been described. Am6.2a (Am3136) is not unmodified, while Am6.2b (Am3214) is Trp-76 brominated. Both forms are found in venom with a much more abundant brominated form. Expressed by the venom duct.

The protein localises to the secreted. Functionally, omega-conotoxins act at presynaptic membranes, they bind and block voltage-gated calcium channels (Cav). This chain is Omega-conotoxin-like Am6.2, found in Conus amadis (Amadis cone).